Here is a 246-residue protein sequence, read N- to C-terminus: MyoD family inhibitor (246 aa).

Disordered regions lie at residues 1-76 (MYQV…LDST) and 91-151 (GNPL…SKST). The segment covering 14-26 (APYGAPSAAPGPA) has biased composition (low complexity). The MDFI domain occupies 99-246 (LLPNDSGHPS…MECCGLCFSS (148 aa)).

This sequence belongs to the MDFI family. In terms of assembly, interacts (via C-terminus) with AXIN1 and LEF1. Interacts with CCNT2. Interacts (via C-terminus) with Piezo channel composed of PIEZO1 or PIEZO2; the interaction prolongs Piezo channel inactivation.

It localises to the nucleus. Its subcellular location is the cytoplasm. Functionally, inhibits the transactivation activity of the Myod family of myogenic factors and represses myogenesis. Acts by associating with Myod family members and retaining them in the cytoplasm by masking their nuclear localization signals. Can also interfere with the DNA-binding activity of Myod family members. Plays an important role in trophoblast and chondrogenic differentiation. Regulates the transcriptional activity of TCF7L1/TCF3 by interacting directly with TCF7L1/TCF3 and preventing it from binding DNA. Binds to the axin complex, resulting in an increase in the level of free beta-catenin. Affects axin regulation of the WNT and JNK signaling pathways. Regulates the activity of mechanosensitive Piezo channel. The polypeptide is MyoD family inhibitor (MDFI) (Homo sapiens (Human)).